A 211-amino-acid chain; its full sequence is Thymidine kinase (211 aa).

ATP-binding positions include 9–16 (STMNAGKS) and 87–90 (DEAQ). Glu88 (proton acceptor) is an active-site residue. Positions 145, 147, 182, and 185 each coordinate Zn(2+).

It belongs to the thymidine kinase family. In terms of assembly, homotetramer.

It is found in the cytoplasm. It catalyses the reaction thymidine + ATP = dTMP + ADP + H(+). This chain is Thymidine kinase, found in Rhodopirellula baltica (strain DSM 10527 / NCIMB 13988 / SH1).